The sequence spans 206 residues: Large ribosomal subunit protein uL4 (206 aa).

A disordered region spans residues 46 to 78 (GNRAQKDREQVKHTTKKPWRQKGTGRARAGMSS). The segment covering 58 to 70 (HTTKKPWRQKGTG) has biased composition (basic residues).

This sequence belongs to the universal ribosomal protein uL4 family. Part of the 50S ribosomal subunit.

Functionally, one of the primary rRNA binding proteins, this protein initially binds near the 5'-end of the 23S rRNA. It is important during the early stages of 50S assembly. It makes multiple contacts with different domains of the 23S rRNA in the assembled 50S subunit and ribosome. Its function is as follows. Forms part of the polypeptide exit tunnel. In Burkholderia cenocepacia (strain ATCC BAA-245 / DSM 16553 / LMG 16656 / NCTC 13227 / J2315 / CF5610) (Burkholderia cepacia (strain J2315)), this protein is Large ribosomal subunit protein uL4.